The sequence spans 290 residues: 4-diphosphocytidyl-2-C-methyl-D-erythritol kinase (290 aa).

Residue K13 is part of the active site. 93-103 (PVQAGLGGGSA) contacts ATP. D135 is a catalytic residue.

The protein belongs to the GHMP kinase family. IspE subfamily.

The catalysed reaction is 4-CDP-2-C-methyl-D-erythritol + ATP = 4-CDP-2-C-methyl-D-erythritol 2-phosphate + ADP + H(+). It participates in isoprenoid biosynthesis; isopentenyl diphosphate biosynthesis via DXP pathway; isopentenyl diphosphate from 1-deoxy-D-xylulose 5-phosphate: step 3/6. Catalyzes the phosphorylation of the position 2 hydroxy group of 4-diphosphocytidyl-2C-methyl-D-erythritol. In Desulfitobacterium hafniense (strain Y51), this protein is 4-diphosphocytidyl-2-C-methyl-D-erythritol kinase.